Here is a 179-residue protein sequence, read N- to C-terminus: Ribosome maturation factor RimM (179 aa).

The region spanning 102–179 (DGEYYWYQLE…EMKVEWDADF (78 aa)) is the PRC barrel domain.

It belongs to the RimM family. Binds ribosomal protein uS19.

Its subcellular location is the cytoplasm. In terms of biological role, an accessory protein needed during the final step in the assembly of 30S ribosomal subunit, possibly for assembly of the head region. Essential for efficient processing of 16S rRNA. May be needed both before and after RbfA during the maturation of 16S rRNA. It has affinity for free ribosomal 30S subunits but not for 70S ribosomes. The sequence is that of Ribosome maturation factor RimM from Pseudomonas syringae pv. tomato (strain ATCC BAA-871 / DC3000).